We begin with the raw amino-acid sequence, 557 residues long: Potassium-transporting ATPase potassium-binding subunit (557 aa).

12 consecutive transmembrane segments (helical) span residues 5-25, 63-83, 132-152, 170-190, 253-273, 283-303, 329-349, 356-376, 379-399, 416-436, 484-504, and 526-546; these read GFLL…PLGS, LCAI…MLLG, GLTV…FAFI, LLRI…LFFI, FVQM…FGEV, LLWA…WAEV, VLVS…AVIA, ALGG…FGGV, GLYG…LMIG, LTAL…ALAM, LLAF…MAIA, and LFVG…FIPA.

It belongs to the KdpA family. As to quaternary structure, the system is composed of three essential subunits: KdpA, KdpB and KdpC.

It localises to the cell inner membrane. Its function is as follows. Part of the high-affinity ATP-driven potassium transport (or Kdp) system, which catalyzes the hydrolysis of ATP coupled with the electrogenic transport of potassium into the cytoplasm. This subunit binds the periplasmic potassium ions and delivers the ions to the membrane domain of KdpB through an intramembrane tunnel. The sequence is that of Potassium-transporting ATPase potassium-binding subunit from Shigella boydii serotype 4 (strain Sb227).